A 124-amino-acid polypeptide reads, in one-letter code: Small ribosomal subunit protein bS6 (124 aa).

The disordered stretch occupies residues 93–124 (KKAETGPSSMMKTVEREEARKAQQAEYAANNS). Residues 105–115 (TVEREEARKAQ) are compositionally biased toward basic and acidic residues.

It belongs to the bacterial ribosomal protein bS6 family.

Functionally, binds together with bS18 to 16S ribosomal RNA. This is Small ribosomal subunit protein bS6 from Variovorax paradoxus (strain S110).